We begin with the raw amino-acid sequence, 356 residues long: Phosphoribosylformylglycinamidine cyclo-ligase (356 aa).

It belongs to the AIR synthase family.

The protein resides in the cytoplasm. It catalyses the reaction 2-formamido-N(1)-(5-O-phospho-beta-D-ribosyl)acetamidine + ATP = 5-amino-1-(5-phospho-beta-D-ribosyl)imidazole + ADP + phosphate + H(+). The protein operates within purine metabolism; IMP biosynthesis via de novo pathway; 5-amino-1-(5-phospho-D-ribosyl)imidazole from N(2)-formyl-N(1)-(5-phospho-D-ribosyl)glycinamide: step 2/2. In Desulfotalea psychrophila (strain LSv54 / DSM 12343), this protein is Phosphoribosylformylglycinamidine cyclo-ligase.